The primary structure comprises 88 residues: Large ribosomal subunit protein bL27 (88 aa).

Residues 1 to 21 are disordered; that stretch reads MAHKKGASSSRNGRDSAAQRL.

The protein belongs to the bacterial ribosomal protein bL27 family.

This is Large ribosomal subunit protein bL27 from Mycobacterium avium (strain 104).